A 68-amino-acid chain; its full sequence is Conotoxin Mi11.1 (68 aa).

Residues 1 to 26 form the signal peptide; it reads MMLRLTSVSCFLLVIACLNLFQVVLT. Cystine bridges form between C29–C43, C36–C48, C42–C52, and C47–C56. A Tyrosine amide modification is found at Y60. The propeptide occupies 64–68; it reads ATFQE.

It belongs to the conotoxin I2 superfamily. In terms of tissue distribution, expressed by the venom duct.

Its subcellular location is the secreted. This chain is Conotoxin Mi11.1, found in Conus miles (Soldier cone).